Reading from the N-terminus, the 134-residue chain is Protein NrdI (134 aa).

It belongs to the NrdI family.

Functionally, probably involved in ribonucleotide reductase function. The sequence is that of Protein NrdI from Yersinia pseudotuberculosis serotype O:1b (strain IP 31758).